The sequence spans 654 residues: Translation factor GUF1, mitochondrial (654 aa).

The tr-type G domain maps to 57-237 (ENYRNFSIVA…SVIKNIPSPV (181 aa)). Residues 66-73 (AHVDHGKS), 130-134 (DTPGH), and 184-187 (NKID) contribute to the GTP site.

Belongs to the TRAFAC class translation factor GTPase superfamily. Classic translation factor GTPase family. LepA subfamily.

The protein resides in the mitochondrion inner membrane. The enzyme catalyses GTP + H2O = GDP + phosphate + H(+). Its function is as follows. Promotes mitochondrial protein synthesis. May act as a fidelity factor of the translation reaction, by catalyzing a one-codon backward translocation of tRNAs on improperly translocated ribosomes. Binds to mitochondrial ribosomes in a GTP-dependent manner. In Candida albicans (strain SC5314 / ATCC MYA-2876) (Yeast), this protein is Translation factor GUF1, mitochondrial.